We begin with the raw amino-acid sequence, 66 residues long: Large ribosomal subunit protein bL35 (66 aa).

The segment covering 1–16 has biased composition (basic residues); that stretch reads MPKQKTHRASAKRFKR. Residues 1 to 21 are disordered; the sequence is MPKQKTHRASAKRFKRTGSGG.

The protein belongs to the bacterial ribosomal protein bL35 family.

In Streptococcus agalactiae serotype Ia (strain ATCC 27591 / A909 / CDC SS700), this protein is Large ribosomal subunit protein bL35.